The chain runs to 64 residues: MQWLADYWWIILILLVGMILNGIKELRRLDHKRFLDNKPELPPHRDNNAQWDDEDDWPDQNKKK.

The helical transmembrane segment at 3 to 23 (WLADYWWIILILLVGMILNGI) threads the bilayer. The span at 36 to 47 (DNKPELPPHRDN) shows a compositional bias: basic and acidic residues. Residues 36 to 64 (DNKPELPPHRDNNAQWDDEDDWPDQNKKK) form a disordered region.

The protein belongs to the UPF0370 family.

It localises to the cell membrane. This Yersinia pestis bv. Antiqua (strain Antiqua) protein is UPF0370 protein YPA_2246.